Here is a 116-residue protein sequence, read N- to C-terminus: Phycoerythrin alpha-3 subunit (116 aa).

(2R,3E)-phycoerythrobilin-binding residues include S53, E63, R64, C67, and K85.

This sequence belongs to the phycoerythrin family. In terms of assembly, heterotetramer of 2 different alpha chains and 2 identical beta chains which form 2 alpha-beta heterodimers within the heterotetramer. The two alpha-beta heterodimers are rotated to an open configuration in contrast to the closed configuration found in other cryptophyte species due to the insertion of a single amino acid, Asp-65, in a conserved region of the alpha chain. In the open form, the central chromophores are not in physical contact but are separated by a water-filled channel. Post-translationally, contains three phycoerythrobilin chromophores with binding mediated by both the alpha and beta subunits.

The protein localises to the plastid. Its subcellular location is the chloroplast thylakoid membrane. In terms of biological role, light-harvesting photosynthetic tetrapyrrole chromophore-protein from the phycobiliprotein complex. In Hemiselmis andersenii (Cryptophyte alga), this protein is Phycoerythrin alpha-3 subunit.